Reading from the N-terminus, the 406-residue chain is MDNLDEDDLAFFSKPIKKPPLNYAKQLIASSSDSEEESELDTNKQALEHINAQKNITHNENKSAEPLSRQSTILDADEGNQDVSDTTPNACLNEGRHSPKSAISCVTQPVSPVYNTRAAANLRNNSINSEAALSTTSSLLDDDFARRLEEIDRQVQEFEKSSSDMDVQIHTHKREIEEDDDNTSADVPLLKHSKSDHSTLYHSKSEFSTNEPVISVVLQLAVIGQRIPNSNISLPRDWEAPLFFKVKSNQQFRRVRIAYSERKKVDNVVLVFQNQRLWDYGTPKGAGMLKVDTRLVVHAYCHSDFISLKRIKELEVEKLSSVTEDSTAQTCKLITLLLRSSKSEDLRLSIPVDFTVKDLIKRYCTEVKISFHERIRLEFEGEWLDPNDQVQSTELEDEDQVSVVLD.

Interacts with rfp1 and smc5. Post-translationally, phosphorylated by cds1.

The protein resides in the nucleus. Its function is as follows. Required for repair of DNA double strand breaks which occur during replication, or induced by UV or gamma radiation, via recombination between sister chromatids. This has a subsequent role in the maintenance of chromosome structure. May work in conjunction with the Smc5-Smc6 complex. The polypeptide is DNA repair protein rad60 (rad60) (Schizosaccharomyces pombe (strain 972 / ATCC 24843) (Fission yeast)).